The primary structure comprises 561 residues: Phosphatidylinositol 4-kinase gamma 1 (561 aa).

Residues 121–416 enclose the PI3K/PI4K catalytic domain; that stretch reads GAQPLLLPSG…SVFGKTSEDS (296 aa). The tract at residues 127–133 is G-loop; it reads LPSGMGG. Residues 128–134, K149, and 233–236 each bind ATP; these read PSGMGGA and QRFV. The tract at residues 266–274 is catalytic loop; it reads LNLDRHAGN. The interval 296–322 is activation loop; sequence PIDHGLCLPECLDDPYFEWLNWPQALV. Residue D298 participates in ATP binding. The tract at residues 456 to 520 is disordered; the sequence is PPLVPRGPRA…PISPNHDESK (65 aa). The span at 467 to 484 shows a compositional bias: polar residues; sequence TIPNDVTASMSSSQNQRI.

It belongs to the PI3/PI4-kinase family. Type II PI4K subfamily.

It catalyses the reaction a 1,2-diacyl-sn-glycero-3-phospho-(1D-myo-inositol) + ATP = a 1,2-diacyl-sn-glycero-3-phospho-(1D-myo-inositol 4-phosphate) + ADP + H(+). Its function is as follows. The phosphorylation of phosphatidylinositol (PI) to PI4P is the first committed step in the generation of phosphatidylinositol 4,5-bisphosphate (PIP2), a precursor of the second messenger inositol 1,4,5-trisphosphate (InsP3). The chain is Phosphatidylinositol 4-kinase gamma 1 (PI4KG1) from Arabidopsis thaliana (Mouse-ear cress).